Here is a 370-residue protein sequence, read N- to C-terminus: S-adenosylmethionine decarboxylase proenzyme (370 aa).

Phe-28 serves as a coordination point for substrate. Residues Glu-29 and Glu-32 contribute to the active site. Glu-85 is a binding site for substrate. Residue Ser-86 is the Schiff-base intermediate with substrate; via pyruvic acid of the active site. Ser-86 bears the Pyruvic acid (Ser); by autocatalysis mark. The active-site Proton donor; for catalytic activity is the Cys-100. Residues Ser-250 and His-263 each act as proton acceptor; for processing activity in the active site. Glu-267 provides a ligand contact to substrate.

The protein belongs to the eukaryotic AdoMetDC family. Forms a heterodimer with catalytically inactive AdoMetDC prozyme; heterodimerization is required to activate AdoMetDC. It depends on pyruvate as a cofactor. In terms of processing, is synthesized initially as an inactive proenzyme. Formation of the active enzyme involves a self-maturation process in which the active site pyruvoyl group is generated from an internal serine residue via an autocatalytic post-translational modification. Two non-identical subunits are generated from the proenzyme in this reaction, and the pyruvate is formed at the N-terminus of the alpha chain, which is derived from the carboxyl end of the proenzyme. The post-translation cleavage follows an unusual pathway, termed non-hydrolytic serinolysis, in which the side chain hydroxyl group of the serine supplies its oxygen atom to form the C-terminus of the beta chain, while the remainder of the serine residue undergoes an oxidative deamination to the alpha chain.

The enzyme catalyses S-adenosyl-L-methionine + H(+) = S-adenosyl 3-(methylsulfanyl)propylamine + CO2. The protein operates within amine and polyamine biosynthesis; S-adenosylmethioninamine biosynthesis; S-adenosylmethioninamine from S-adenosyl-L-methionine: step 1/1. Allosterically activated by AdoMetDC prozyme. Activated by putrescine. Inhibited by spermine and methylglyoxal-bis(guanylhydrazone) (MGBG) and slightly by spermidine. Inhibited by 5'-([(Z)-4-amino-2-butenyl]methylamino)-5'-deoxyadenosine (MDL 73811). Its function is as follows. Probably in association with catalytically inactive AdoMetDC prozyme, catalyzes the decarboxylation of S-adenosyl-L-methionine which is essential for the biosynthesis of the polyamine spermidine. Required for growth and survival during the bloodstream life cycle stage. The chain is S-adenosylmethionine decarboxylase proenzyme from Trypanosoma cruzi.